Reading from the N-terminus, the 287-residue chain is Acetylglutamate kinase (287 aa).

Substrate-binding positions include 70–71, arginine 92, and asparagine 184; that span reads GG.

Belongs to the acetylglutamate kinase family. ArgB subfamily.

It is found in the cytoplasm. The catalysed reaction is N-acetyl-L-glutamate + ATP = N-acetyl-L-glutamyl 5-phosphate + ADP. Its pathway is amino-acid biosynthesis; L-arginine biosynthesis; N(2)-acetyl-L-ornithine from L-glutamate: step 2/4. Functionally, catalyzes the ATP-dependent phosphorylation of N-acetyl-L-glutamate. The chain is Acetylglutamate kinase from Dinoroseobacter shibae (strain DSM 16493 / NCIMB 14021 / DFL 12).